Consider the following 298-residue polypeptide: Elongation factor Ts (298 aa).

The tract at residues 79 to 82 (TDFV) is involved in Mg(2+) ion dislocation from EF-Tu.

Belongs to the EF-Ts family.

Its subcellular location is the cytoplasm. Functionally, associates with the EF-Tu.GDP complex and induces the exchange of GDP to GTP. It remains bound to the aminoacyl-tRNA.EF-Tu.GTP complex up to the GTP hydrolysis stage on the ribosome. The sequence is that of Elongation factor Ts (tsf) from Mycoplasma pneumoniae (strain ATCC 29342 / M129 / Subtype 1) (Mycoplasmoides pneumoniae).